The primary structure comprises 226 residues: Protein pdh1 (226 aa).

Positions 1–26 (MNHFSKFSVTKRLLILEVLFSAISFG) are cleaved as a signal peptide. Residues 27–41 (ISIYIKVFGRSSIVT) are Extracellular-facing. A helical membrane pass occupies residues 42–62 (FFLLCFHLVPNALFLFPWTII). At 63–65 (TTS) the chain is on the cytoplasmic side. Residues 66–86 (FVDANVFTLLSSILILSVYGV) traverse the membrane as a helical segment. The Extracellular portion of the chain corresponds to 87 to 97 (EIERSWGHKEY). Residues 98–118 (LLFCQFLTVIPNIAVLIPCFI) traverse the membrane as a helical segment. The Cytoplasmic portion of the chain corresponds to 119–191 (AYKITDSHYL…VFQSFPWTYF (73 aa)). A helical transmembrane segment spans residues 192 to 212 (CLAVSGTCISELYVLFVHPVV). Over 213–226 (QELFHLESHTQLPI) the chain is Extracellular.

It localises to the membrane. The protein is Protein pdh1 (pdh1) of Schizosaccharomyces pombe (strain 972 / ATCC 24843) (Fission yeast).